The chain runs to 216 residues: Ribonuclease HII (216 aa).

In terms of domain architecture, RNase H type-2 spans 33–216 (WPVAGADEAG…RMSFRPFRQL (184 aa)). Asp-39, Glu-40, and Asp-130 together coordinate a divalent metal cation.

This sequence belongs to the RNase HII family. Mn(2+) serves as cofactor. It depends on Mg(2+) as a cofactor.

It localises to the cytoplasm. The enzyme catalyses Endonucleolytic cleavage to 5'-phosphomonoester.. Endonuclease that specifically degrades the RNA of RNA-DNA hybrids. The polypeptide is Ribonuclease HII (Sinorhizobium medicae (strain WSM419) (Ensifer medicae)).